Consider the following 382-residue polypeptide: Alkaline serine protease ver112 (382 aa).

The signal sequence occupies residues 1-15 (MRLSIIAAVLPLALA). Residues 16–102 (APVAEPEIAP…IEQDAIFSIN (87 aa)) constitute a propeptide that is removed on maturation. The Inhibitor I9 domain occupies 56 to 99 (SKIPGIERVYENVLNGFSATLSNEELERLRRDPDVESIEQDAIF). One can recognise a Peptidase S8 domain in the interval 111–382 (TWGLTRISHR…VNYLAFNGAT (272 aa)). Disulfide bonds link Cys-138–Cys-227 and Cys-282–Cys-353. Catalysis depends on charge relay system residues Asp-143, His-173, and Ser-328.

It belongs to the peptidase S8 family.

The protein resides in the secreted. Its activity is regulated as follows. Inhibited by phenylmethylsulfonyl fluoride (PMSF). In terms of biological role, serine protease which can degrade the nematode cuticle. In Corniculantispora psalliotae (Lecanicillium psalliotae), this protein is Alkaline serine protease ver112.